We begin with the raw amino-acid sequence, 165 residues long: uncharacterized protein (165 aa).

An RCK C-terminal domain is found at 76–161 (LEQVESALDD…LKRLIREKLT (86 aa)).

This is an uncharacterized protein from Bacillus subtilis (strain 168).